Consider the following 158-residue polypeptide: Cyclic pyranopterin monophosphate synthase (158 aa).

Substrate is bound by residues 75 to 77 and 113 to 114; these read LCH and ME. The active site involves Asp-128.

Belongs to the MoaC family. Homohexamer; trimer of dimers.

It catalyses the reaction (8S)-3',8-cyclo-7,8-dihydroguanosine 5'-triphosphate = cyclic pyranopterin phosphate + diphosphate. It participates in cofactor biosynthesis; molybdopterin biosynthesis. Catalyzes the conversion of (8S)-3',8-cyclo-7,8-dihydroguanosine 5'-triphosphate to cyclic pyranopterin monophosphate (cPMP). The sequence is that of Cyclic pyranopterin monophosphate synthase from Azorhizobium caulinodans (strain ATCC 43989 / DSM 5975 / JCM 20966 / LMG 6465 / NBRC 14845 / NCIMB 13405 / ORS 571).